Consider the following 346-residue polypeptide: Actin-like protein 10 (346 aa).

It belongs to the actin family.

The chain is Actin-like protein 10 (Actl10) from Mus musculus (Mouse).